The primary structure comprises 651 residues: p-hydroxybenzoic acid efflux pump subunit AaeB (651 aa).

11 helical membrane passes run 11-31 (FAFK…HLQL), 41-61 (AAIV…SGAI), 67-87 (LRII…VLTI), 91-111 (VLTL…SSLV), 119-139 (FGLA…TPLL), 150-170 (EIVL…PRSI), 368-388 (LFWL…IAVV), 405-425 (FLVG…FIIP), 429-449 (QSML…GIEV), 455-475 (GSLG…PMIF), and 481-501 (LDSA…LLLI).

Belongs to the aromatic acid exporter ArAE (TC 2.A.85) family.

It is found in the cell inner membrane. Its function is as follows. Forms an efflux pump with AaeA. Could function as a metabolic relief valve, allowing to eliminate certain compounds when they accumulate to high levels in the cell. This is p-hydroxybenzoic acid efflux pump subunit AaeB from Yersinia pseudotuberculosis serotype O:1b (strain IP 31758).